Here is a 785-residue protein sequence, read N- to C-terminus: Endonuclease MutS2 (785 aa).

334-341 (GPNTGGKT) contributes to the ATP binding site. The region spanning 710–785 (LDLRGQRYDE…GNGATIVKLK (76 aa)) is the Smr domain.

The protein belongs to the DNA mismatch repair MutS family. MutS2 subfamily. In terms of assembly, homodimer. Binds to stalled ribosomes, contacting rRNA.

Its function is as follows. Endonuclease that is involved in the suppression of homologous recombination and thus may have a key role in the control of bacterial genetic diversity. Acts as a ribosome collision sensor, splitting the ribosome into its 2 subunits. Detects stalled/collided 70S ribosomes which it binds and splits by an ATP-hydrolysis driven conformational change. Acts upstream of the ribosome quality control system (RQC), a ribosome-associated complex that mediates the extraction of incompletely synthesized nascent chains from stalled ribosomes and their subsequent degradation. Probably generates substrates for RQC. This is Endonuclease MutS2 from Lactobacillus helveticus (strain DPC 4571).